Reading from the N-terminus, the 485-residue chain is Argininosuccinate lyase (485 aa).

Belongs to the lyase 1 family. Argininosuccinate lyase subfamily.

Its subcellular location is the cytoplasm. It carries out the reaction 2-(N(omega)-L-arginino)succinate = fumarate + L-arginine. The protein operates within amino-acid biosynthesis; L-arginine biosynthesis; L-arginine from L-ornithine and carbamoyl phosphate: step 3/3. This is Argininosuccinate lyase from Nitrosopumilus maritimus (strain SCM1).